A 102-amino-acid chain; its full sequence is Class I hydrophobin 1 (102 aa).

The signal sequence occupies residues Met1–Ala18. 4 disulfides stabilise this stretch: Cys37–Cys84, Cys45–Cys78, Cys46–Cys63, and Cys85–Cys97.

It belongs to the fungal hydrophobin family.

It is found in the secreted. Its subcellular location is the cell wall. Functionally, aerial growth, conidiation, and dispersal of filamentous fungi in the environment rely upon a capability of their secreting small amphipathic proteins called hydrophobins (HPBs) with low sequence identity. Class I can self-assemble into an outermost layer of rodlet bundles on aerial cell surfaces, conferring cellular hydrophobicity that supports fungal growth, development and dispersal; whereas Class II form highly ordered films at water-air interfaces through intermolecular interactions but contribute nothing to the rodlet structure. Hyd1 is essential for stress tolerance, conidial hydrophobicity, adhesion to insect cuticle, and insect infectivity/pathogenicity. Plays a neglectable role in hyphal growth and asexual development. The protein is Class I hydrophobin 1 of Metarhizium robertsii (strain ARSEF 23 / ATCC MYA-3075) (Metarhizium anisopliae (strain ARSEF 23)).